A 466-amino-acid polypeptide reads, in one-letter code: uncharacterized protein (466 aa).

A disordered region spans residues 1-22 (MKKNNERVNTNPSLISKSYNMK). Positions 7-19 (RVNTNPSLISKSY) are enriched in polar residues. Phosphoserine occurs at positions 40 and 42. The RRM domain occupies 108-183 (YFVHMDNISP…RLISATITNH (76 aa)). The segment at 186–207 (RLPNAEHLESSTKTKDESQDKD) is disordered. The span at 188-207 (PNAEHLESSTKTKDESQDKD) shows a compositional bias: basic and acidic residues. In terms of domain architecture, CID spans 209-368 (LTKLDRAKLE…RAWRNFSGNT (160 aa)). The residue at position 371 (serine 371) is a Phosphoserine. The segment covering 425–436 (STETSSSSSPQP) has biased composition (low complexity). The tract at residues 425 to 448 (STETSSSSSPQPTEERKAKFKPSF) is disordered.

It is found in the nucleus. The protein resides in the cytoplasm. This is an uncharacterized protein from Schizosaccharomyces pombe (strain 972 / ATCC 24843) (Fission yeast).